Here is a 413-residue protein sequence, read N- to C-terminus: Scarecrow-like protein 21 (413 aa).

The region spanning 41-413 (IVEAISRGDL…RILVSSCAWK (373 aa)) is the GRAS domain. The segment at 48–108 (GDLKLVLVAC…VARLAASGSS (61 aa)) is leucine repeat I (LRI). The tract at residues 127-192 (VYVLHEVCPY…GGAPNIRITG (66 aa)) is VHIID. A VHIID motif is present at residues 158 to 162 (IHIID). Residues 201-233 (TVKKRLEKLAKKFDVPFRFNAVSRPSCEVEVEN) are leucine repeat II (LRII). Residues 242-336 (LGVNFAYMLH…QHCMARDVVN (95 aa)) are PFYRE. Positions 339 to 413 (ACEGAERIER…RILVSSCAWK (75 aa)) are SAW.

The protein belongs to the GRAS family. In terms of assembly, interacts with Meloidogyne incognita 16D10. In terms of tissue distribution, expressed in seedlings, roots, cotyledons, leaves and flowers.

It localises to the nucleus. Probable transcription factor involved in plant development. In Arabidopsis thaliana (Mouse-ear cress), this protein is Scarecrow-like protein 21 (SCL21).